A 650-amino-acid polypeptide reads, in one-letter code: Tudor domain-containing protein 3 (650 aa).

Residues 147 to 169 (TKTFGGGGNAGSNLNPGAGGSRN) form a disordered region. Residues 192-232 (LVDEKALRHITEMGFCKDAARQALMDHSNNVEAALNFLLTG) enclose the UBA domain. 3 disordered regions span residues 233-271 (SKPK…APST), 286-406 (EDNK…SCNN), and 427-447 (HQNS…DQRY). Composition is skewed to basic and acidic residues over residues 320–337 (TRND…RFQK) and 366–388 (HWME…KDFS). Residues 390 to 406 (PPSNHQNEGSYRKSCNN) show a composition bias toward polar residues. In terms of domain architecture, Tudor spans 554 to 614 (SWRSGDECLA…RPIQAEAWEE (61 aa)). Positions 616 to 650 (GEFGDSLDFRRGGDGQPRRSTRPTQQFYQPPRARN) are disordered. The span at 622-632 (LDFRRGGDGQP) shows a compositional bias: basic and acidic residues.

In terms of assembly, component of mRNA stress granules.

It localises to the cytoplasm. It is found in the nucleus. Its function is as follows. Scaffolding protein that specifically recognizes and binds dimethylarginine-containing proteins. Plays a role in the regulation of translation of target mRNAs by binding Arg/Gly-rich motifs (GAR) in dimethylarginine-containing proteins. In nucleus, acts as a coactivator: recognizes and binds asymmetric dimethylation on the core histone tails associated with transcriptional activation (H3R17me2a and H4R3me2a) and recruits proteins at these arginine-methylated loci. In cytoplasm, acts as an antiviral factor that participates in the assembly of stress granules together with G3BP1. This is Tudor domain-containing protein 3 (tdrd3) from Xenopus laevis (African clawed frog).